The sequence spans 326 residues: tRNA-modifying protein YgfZ (326 aa).

Residues tryptophan 27 and tryptophan 189 each coordinate folate.

It belongs to the tRNA-modifying YgfZ family.

It localises to the cytoplasm. Folate-binding protein involved in regulating the level of ATP-DnaA and in the modification of some tRNAs. It is probably a key factor in regulatory networks that act via tRNA modification, such as initiation of chromosomal replication. The polypeptide is tRNA-modifying protein YgfZ (Enterobacter sp. (strain 638)).